Consider the following 194-residue polypeptide: Ion-translocating oxidoreductase complex subunit A (194 aa).

The next 6 membrane-spanning stretches (helical) occupy residues 4 to 24, 39 to 59, 72 to 92, 102 to 122, 135 to 155, and 172 to 192; these read LALI…QFLG, IGLS…SHIL, LRTI…EMLV, VLGI…VALL, TTQG…FAAL, and AIGM…SGLV.

This sequence belongs to the NqrDE/RnfAE family. As to quaternary structure, the complex is composed of six subunits: RnfA, RnfB, RnfC, RnfD, RnfE and RnfG.

The protein resides in the cell inner membrane. Its function is as follows. Part of a membrane-bound complex that couples electron transfer with translocation of ions across the membrane. The protein is Ion-translocating oxidoreductase complex subunit A of Pseudomonas aeruginosa (strain LESB58).